Reading from the N-terminus, the 335-residue chain is Beta-ketoacyl-[acyl-carrier-protein] synthase III (335 aa).

Catalysis depends on residues C117 and H258. An ACP-binding region spans residues 259–263 (QANQR). N288 is a catalytic residue.

It belongs to the thiolase-like superfamily. FabH family. In terms of assembly, homodimer.

The protein resides in the cytoplasm. It catalyses the reaction malonyl-[ACP] + acetyl-CoA + H(+) = 3-oxobutanoyl-[ACP] + CO2 + CoA. The protein operates within lipid metabolism; fatty acid biosynthesis. Functionally, catalyzes the condensation reaction of fatty acid synthesis by the addition to an acyl acceptor of two carbons from malonyl-ACP. Catalyzes the first condensation reaction which initiates fatty acid synthesis and may therefore play a role in governing the total rate of fatty acid production. Possesses both acetoacetyl-ACP synthase and acetyl transacylase activities. Its substrate specificity determines the biosynthesis of branched-chain and/or straight-chain of fatty acids. This is Beta-ketoacyl-[acyl-carrier-protein] synthase III from Synechococcus elongatus (strain ATCC 33912 / PCC 7942 / FACHB-805) (Anacystis nidulans R2).